Reading from the N-terminus, the 393-residue chain is Riboflavin biosynthesis protein RibBA (393 aa).

Residues Met1–Lys200 form a DHBP synthase region. D-ribulose 5-phosphate-binding positions include Arg27–Glu28, Asp32, Arg139–Thr143, and Glu163. Glu28 contributes to the Mg(2+) binding site. Mg(2+) is bound at residue His142. Residues Leu201–Ile393 are GTP cyclohydrolase II. Arg249–Ala253 is a GTP binding site. Zn(2+)-binding residues include Cys254, Cys265, and Cys267. Residues Gln270, Glu291–Arg293, and Thr313 contribute to the GTP site. Asp325 functions as the Proton acceptor; for GTP cyclohydrolase activity in the catalytic mechanism. Arg327 serves as the catalytic Nucleophile; for GTP cyclohydrolase activity. Ser348 and Lys353 together coordinate GTP.

It in the N-terminal section; belongs to the DHBP synthase family. This sequence in the C-terminal section; belongs to the GTP cyclohydrolase II family. It depends on Mg(2+) as a cofactor. The cofactor is Mn(2+). Requires Zn(2+) as cofactor.

It catalyses the reaction D-ribulose 5-phosphate = (2S)-2-hydroxy-3-oxobutyl phosphate + formate + H(+). The catalysed reaction is GTP + 4 H2O = 2,5-diamino-6-hydroxy-4-(5-phosphoribosylamino)-pyrimidine + formate + 2 phosphate + 3 H(+). It participates in cofactor biosynthesis; riboflavin biosynthesis; 2-hydroxy-3-oxobutyl phosphate from D-ribulose 5-phosphate: step 1/1. It functions in the pathway cofactor biosynthesis; riboflavin biosynthesis; 5-amino-6-(D-ribitylamino)uracil from GTP: step 1/4. Catalyzes the conversion of D-ribulose 5-phosphate to formate and 3,4-dihydroxy-2-butanone 4-phosphate. In terms of biological role, catalyzes the conversion of GTP to 2,5-diamino-6-ribosylamino-4(3H)-pyrimidinone 5'-phosphate (DARP), formate and pyrophosphate. The polypeptide is Riboflavin biosynthesis protein RibBA (Staphylococcus aureus (strain Mu50 / ATCC 700699)).